The primary structure comprises 198 residues: Photosystem I assembly protein Ycf4 (198 aa).

2 helical membrane-spanning segments follow: residues 35 to 57 and 70 to 92; these read WFYNIVMLLGGIGFLIVGISSYI and IIFFPQGITMCFYGTCGILFSIN.

This sequence belongs to the Ycf4 family.

The protein resides in the plastid. It is found in the chloroplast thylakoid membrane. Its function is as follows. Seems to be required for the assembly of the photosystem I complex. The chain is Photosystem I assembly protein Ycf4 from Euglena gracilis.